A 410-amino-acid chain; its full sequence is Exopolygalacturonase (410 aa).

The signal sequence occupies residues 1–22; the sequence is MACTNNAMRALFLLVLFCIVHG. N-linked (GlcNAc...) asparagine glycosylation is present at Asn-89. PbH1 repeat units follow at residues 192-218, 219-240, 242-262, 272-293, and 337-377; these read CKDM…HMGD, SSGI…SIGP, TSKV…SIGS, VTDI…RIKA, and ASKV…TMDD. Asp-233 (proton donor) is an active-site residue. Cys-235 and Cys-252 are oxidised to a cystine. An N-linked (GlcNAc...) asparagine glycan is attached at Asn-246. His-256 is a catalytic residue. An N-linked (GlcNAc...) asparagine glycan is attached at Asn-349. Cys-364 and Cys-370 are disulfide-bonded. Asn-387 is a glycosylation site (N-linked (GlcNAc...) asparagine). Cys-393 and Cys-409 form a disulfide bridge.

The protein belongs to the glycosyl hydrolase 28 family. As to expression, pollen.

The protein localises to the secreted. Its subcellular location is the cell wall. The enzyme catalyses [(1-&gt;4)-alpha-D-galacturonosyl](n) + H2O = alpha-D-galacturonate + [(1-&gt;4)-alpha-D-galacturonosyl](n-1). May function in depolymerizing pectin during pollen development, germination, and tube growth. Acts as an exo-polygalacturonase. This Zea mays (Maize) protein is Exopolygalacturonase (PG1).